The chain runs to 216 residues: Octanoyltransferase (216 aa).

The BPL/LPL catalytic domain maps to 32 to 207 (ENSPDELWLV…TFSQLLGYEH (176 aa)). Substrate contacts are provided by residues 71–78 (RGGQVTYH), 138–140 (SLG), and 151–153 (GLA). Cys169 serves as the catalytic Acyl-thioester intermediate.

This sequence belongs to the LipB family.

The protein resides in the cytoplasm. It catalyses the reaction octanoyl-[ACP] + L-lysyl-[protein] = N(6)-octanoyl-L-lysyl-[protein] + holo-[ACP] + H(+). The protein operates within protein modification; protein lipoylation via endogenous pathway; protein N(6)-(lipoyl)lysine from octanoyl-[acyl-carrier-protein]: step 1/2. In terms of biological role, catalyzes the transfer of endogenously produced octanoic acid from octanoyl-acyl-carrier-protein onto the lipoyl domains of lipoate-dependent enzymes. Lipoyl-ACP can also act as a substrate although octanoyl-ACP is likely to be the physiological substrate. In Shewanella amazonensis (strain ATCC BAA-1098 / SB2B), this protein is Octanoyltransferase.